A 98-amino-acid polypeptide reads, in one-letter code: NADH-ubiquinone oxidoreductase chain 4L (98 aa).

3 consecutive transmembrane segments (helical) span residues 1–21, 28–48, and 59–79; these read MTSI…GVLI, STLL…ALLI, and APLI…ALLV.

Belongs to the complex I subunit 4L family. As to quaternary structure, core subunit of respiratory chain NADH dehydrogenase (Complex I) which is composed of 45 different subunits.

The protein resides in the mitochondrion inner membrane. The catalysed reaction is a ubiquinone + NADH + 5 H(+)(in) = a ubiquinol + NAD(+) + 4 H(+)(out). Functionally, core subunit of the mitochondrial membrane respiratory chain NADH dehydrogenase (Complex I) which catalyzes electron transfer from NADH through the respiratory chain, using ubiquinone as an electron acceptor. Part of the enzyme membrane arm which is embedded in the lipid bilayer and involved in proton translocation. The sequence is that of NADH-ubiquinone oxidoreductase chain 4L (MT-ND4L) from Vombatus ursinus (Common wombat).